The sequence spans 335 residues: Glyceraldehyde-3-phosphate dehydrogenase (335 aa).

Residues 12-13, Asp-34, Arg-78, and Ser-120 each bind NAD(+); that span reads RI. Residues 151–153 and Thr-182 each bind D-glyceraldehyde 3-phosphate; that span reads SCT. Catalysis depends on Cys-152, which acts as the Nucleophile. Asn-183 provides a ligand contact to NAD(+). D-glyceraldehyde 3-phosphate contacts are provided by residues Arg-197, 210-211, and Arg-233; that span reads TG. Position 315 (Asn-315) interacts with NAD(+).

This sequence belongs to the glyceraldehyde-3-phosphate dehydrogenase family. Homotetramer.

The protein resides in the cytoplasm. It carries out the reaction D-glyceraldehyde 3-phosphate + phosphate + NAD(+) = (2R)-3-phospho-glyceroyl phosphate + NADH + H(+). It participates in carbohydrate degradation; glycolysis; pyruvate from D-glyceraldehyde 3-phosphate: step 1/5. Its function is as follows. Catalyzes the oxidative phosphorylation of glyceraldehyde 3-phosphate (G3P) to 1,3-bisphosphoglycerate (BPG) using the cofactor NAD. The first reaction step involves the formation of a hemiacetal intermediate between G3P and a cysteine residue, and this hemiacetal intermediate is then oxidized to a thioester, with concomitant reduction of NAD to NADH. The reduced NADH is then exchanged with the second NAD, and the thioester is attacked by a nucleophilic inorganic phosphate to produce BPG. The polypeptide is Glyceraldehyde-3-phosphate dehydrogenase (gap) (Geobacillus stearothermophilus (Bacillus stearothermophilus)).